Consider the following 165-residue polypeptide: UPF0303 protein Bamb_1459 (165 aa).

It belongs to the UPF0303 family.

This chain is UPF0303 protein Bamb_1459, found in Burkholderia ambifaria (strain ATCC BAA-244 / DSM 16087 / CCUG 44356 / LMG 19182 / AMMD) (Burkholderia cepacia (strain AMMD)).